Reading from the N-terminus, the 410-residue chain is LL-diaminopimelate aminotransferase (410 aa).

Tyr-15 and Gly-42 together coordinate substrate. Pyridoxal 5'-phosphate-binding positions include Tyr-72, 108-109, Tyr-132, Asn-188, Tyr-219, and 247-249; these read AK and SFS. Residues Lys-109, Tyr-132, and Asn-188 each contribute to the substrate site. Lys-250 is subject to N6-(pyridoxal phosphate)lysine. Residues Arg-258 and Asn-293 each coordinate pyridoxal 5'-phosphate. Residues Asn-293 and Arg-389 each coordinate substrate.

This sequence belongs to the class-I pyridoxal-phosphate-dependent aminotransferase family. LL-diaminopimelate aminotransferase subfamily. In terms of assembly, homodimer. The cofactor is pyridoxal 5'-phosphate.

It catalyses the reaction (2S,6S)-2,6-diaminopimelate + 2-oxoglutarate = (S)-2,3,4,5-tetrahydrodipicolinate + L-glutamate + H2O + H(+). It participates in amino-acid biosynthesis; L-lysine biosynthesis via DAP pathway; LL-2,6-diaminopimelate from (S)-tetrahydrodipicolinate (aminotransferase route): step 1/1. In terms of biological role, involved in the synthesis of meso-diaminopimelate (m-DAP or DL-DAP), required for both lysine and peptidoglycan biosynthesis. Catalyzes the direct conversion of tetrahydrodipicolinate to LL-diaminopimelate. This chain is LL-diaminopimelate aminotransferase, found in Bacteroides thetaiotaomicron (strain ATCC 29148 / DSM 2079 / JCM 5827 / CCUG 10774 / NCTC 10582 / VPI-5482 / E50).